The primary structure comprises 905 residues: A disintegrin and metalloproteinase with thrombospondin motifs 8 (905 aa).

A signal peptide spans 1 to 28; sequence MLRDPTTTGWPPLLLLLLQLPPPPLVCG. The propeptide occupies 29–228; it reads APAGPGTGAQ…PFGSKTRSKR (200 aa). Disordered stretches follow at residues 139 to 163 and 186 to 225; these read PQGA…RRED and NGQG…SKTR. Positions 191-215 are enriched in basic and acidic residues; it reads ERSDNEEDRKQDKEGLLKETEDSRK. The Peptidase M12B domain occupies 234–444; the sequence is RFVETLLVAD…GHGDCLLDAP (211 aa). 10 disulfide bridges follow: C309/C362, C338/C344, C356/C439, C394/C423, C478/C502, C487/C523, C517/C528, C554/C591, C558/C596, and C569/C581. H378 is a binding site for Zn(2+). E379 is a catalytic residue. Residues H382 and H388 each contribute to the Zn(2+) site. N-linked (GlcNAc...) asparagine glycans are attached at residues N415, N480, and N506. Positions 453-541 constitute a Disintegrin domain; the sequence is GLPGHSTLYE…EDVENPKAVV (89 aa). Positions 542 to 597 constitute a TSP type-1 1 domain; sequence DGDWGPWRPWGQCSRTCGGGIQFSNRECDNPMPQNGGRFCLGERVKYQSCNTEECP. N-linked (GlcNAc...) asparagine glycosylation is present at N615. A spacer region spans residues 706-847; the sequence is RKISGSFTPF…RATTNIIQSL (142 aa). In terms of domain architecture, TSP type-1 2 spans 848–904; that stretch reads PSAEWVLGDWSECPSTCRGSWQRRTVECRDPSGQASDTCDEALKPEDAKPCGSQPCP. Residues 877–905 are disordered; it reads DPSGQASDTCDEALKPEDAKPCGSQPCPL.

Zn(2+) serves as cofactor. In terms of processing, the precursor is cleaved by a furin endopeptidase. Post-translationally, glycosylated. Can be O-fucosylated by POFUT2 on a serine or a threonine residue found within the consensus sequence C1-X(2)-(S/T)-C2-G of the TSP type-1 repeat domains where C1 and C2 are the first and second cysteine residue of the repeat, respectively. Fucosylated repeats can then be further glycosylated by the addition of a beta-1,3-glucose residue by the glucosyltransferase, B3GALTL. Fucosylation mediates the efficient secretion of ADAMTS family members. Can also be C-glycosylated with one or two mannose molecules on tryptophan residues within the consensus sequence W-X-X-W of the TPRs, and N-glycosylated. These other glycosylations can also facilitate secretion. Expressed specifically in adult lung and heart and low expression during mouse development.

Its subcellular location is the secreted. It localises to the extracellular space. It is found in the extracellular matrix. Functionally, has anti-angiogenic properties. This Mus musculus (Mouse) protein is A disintegrin and metalloproteinase with thrombospondin motifs 8 (Adamts8).